We begin with the raw amino-acid sequence, 184 residues long: Probable gluconokinase (184 aa).

Position 11-18 (11-18) interacts with ATP; the sequence is GVSGSGKS.

The protein belongs to the gluconokinase GntK/GntV family.

It carries out the reaction D-gluconate + ATP = 6-phospho-D-gluconate + ADP + H(+). The protein operates within carbohydrate acid metabolism; D-gluconate degradation. The polypeptide is Probable gluconokinase (Idnk) (Mus musculus (Mouse)).